Here is a 451-residue protein sequence, read N- to C-terminus: MNPNQKIITIGSMSLTIATVCFLMQIAILATNVTLHFRQNEESIPAYNQTTPCKPIIIERNIKYRNWSKPQCQITGFAPFSKDNSIRLSAGGGIWVTREPYVSCDPSKCYQFALGQGTTLDHNHSNGTIHDRTPHRTLLMNELGVPFHLGTRQVCIAWSRSSCHDGKAWLHVCVTGDDRNATASFIYNGMLVDSIGSWSQNILRTQESECVCINGTCTVVMTDGSASGKADTRILFIREGKIVHISPLSGSAQHIEECSCYPKSYPNVRCVCRDNWKGSNRPVKLDINMADYSIDSSYVCSGLVGDTPRNDDSSSSSNCRDPNNERGNPGVKGWAFDIGDDVWMGRTISKDSRSGYETFRVISGWATANSKSQTNRQVIVDNNNWSGYSGIFSVESKSCINRCFYVELIRGRPQENRVWWTTNSIVVFCGTSGTYGTGSWPDGANINFMPL.

The Intravirion segment spans residues 1-6 (MNPNQK). Residues 7–29 (IITIGSMSLTIATVCFLMQIAIL) form a helical membrane-spanning segment. Positions 11–33 (GSMSLTIATVCFLMQIAILATNV) are involved in apical transport and lipid raft association. The Virion surface portion of the chain corresponds to 30–451 (ATNVTLHFRQ…DGANINFMPL (422 aa)). 3 N-linked (GlcNAc...) asparagine; by host glycosylation sites follow: Asn-32, Asn-48, and Asn-66. The segment at 36 to 68 (HFRQNEESIPAYNQTTPCKPIIIERNIKYRNWS) is hypervariable stalk region. A head of neuraminidase region spans residues 71 to 451 (QCQITGFAPF…DGANINFMPL (381 aa)). Intrachain disulfides connect Cys-72–Cys-399, Cys-104–Cys-109, Cys-163–Cys-210, Cys-212–Cys-217, Cys-258–Cys-272, Cys-260–Cys-270, Cys-300–Cys-319, and Cys-403–Cys-429. A substrate-binding site is contributed by Arg-98. Asn-123 and Asn-126 each carry an N-linked (GlcNAc...) asparagine; by host glycan. The active-site Proton donor/acceptor is the Asp-131. Arg-132 is a binding site for substrate. N-linked (GlcNAc...) asparagine; by host glycosylation is found at Asn-180 and Asn-214. Substrate is bound at residue 256–257 (EE). Residue Arg-273 participates in substrate binding. The Ca(2+) site is built by Asp-274, Gly-278, and Asp-306. The interval 307–331 (TPRNDDSSSSSNCRDPNNERGNPGV) is disordered. Position 353 (Arg-353) interacts with substrate. Asn-384 is a glycosylation site (N-linked (GlcNAc...) asparagine; by host). Tyr-388 acts as the Nucleophile in catalysis.

Belongs to the glycosyl hydrolase 34 family. Homotetramer. The cofactor is Ca(2+). Post-translationally, N-glycosylated.

The protein resides in the virion membrane. It localises to the host apical cell membrane. It catalyses the reaction Hydrolysis of alpha-(2-&gt;3)-, alpha-(2-&gt;6)-, alpha-(2-&gt;8)- glycosidic linkages of terminal sialic acid residues in oligosaccharides, glycoproteins, glycolipids, colominic acid and synthetic substrates.. Inhibited by the neuraminidase inhibitors zanamivir (Relenza) and oseltamivir (Tamiflu). These drugs interfere with the release of progeny virus from infected cells and are effective against all influenza strains. Resistance to neuraminidase inhibitors is quite rare. Catalyzes the removal of terminal sialic acid residues from viral and cellular glycoconjugates. Cleaves off the terminal sialic acids on the glycosylated HA during virus budding to facilitate virus release. Additionally helps virus spread through the circulation by further removing sialic acids from the cell surface. These cleavages prevent self-aggregation and ensure the efficient spread of the progeny virus from cell to cell. Otherwise, infection would be limited to one round of replication. Described as a receptor-destroying enzyme because it cleaves a terminal sialic acid from the cellular receptors. May facilitate viral invasion of the upper airways by cleaving the sialic acid moieties on the mucin of the airway epithelial cells. Likely to plays a role in the budding process through its association with lipid rafts during intracellular transport. May additionally display a raft-association independent effect on budding. Plays a role in the determination of host range restriction on replication and virulence. Sialidase activity in late endosome/lysosome traffic seems to enhance virus replication. This is Neuraminidase from Aves.